The primary structure comprises 304 residues: Peroxisomal membrane protein 13 (304 aa).

Disordered stretches follow at residues 1 to 78 (MASQ…WEQQ) and 258 to 304 (PRKM…VWGN). 2 stretches are compositionally biased toward polar residues: residues 19 to 44 (NTSG…SGTA) and 56 to 67 (RPNTAANMNSLS). The span at 262–279 (QQPPQGPNGLPLPHQPHG) shows a compositional bias: low complexity.

Belongs to the peroxin-13 family. As to quaternary structure, interacts with PEX14; forming the PEX13-PEX14 docking complex. Interacts (via N-terminus) with PEX7, but not with PEX5. Interacts with APEM9 (via N-terminus). In terms of tissue distribution, highly expressed in pollen. Detected in shoots, roots, stems, leaves, inflorescences and emasculated postils. Strongly expressed in both male and female gametophytes during fertilization.

It localises to the peroxisome membrane. Functionally, component of the PEX13-PEX14 docking complex, a translocon channel that specifically mediates the import of peroxisomal cargo proteins bound to PEX5 receptor. The PEX13-PEX14 docking complex forms a large import pore which can be opened to a diameter of about 9 nm. Mechanistically, PEX5 receptor along with cargo proteins associates with the PEX14 subunit of the PEX13-PEX14 docking complex in the cytosol, leading to the insertion of the receptor into the organelle membrane with the concomitant translocation of the cargo into the peroxisome matrix. Essential for pollen-tube discharge that take place only in the presence of functional peroxisomes in either the male or the female gametophyte. This is Peroxisomal membrane protein 13 from Arabidopsis thaliana (Mouse-ear cress).